Consider the following 60-residue polypeptide: Large ribosomal subunit protein eL37 (60 aa).

Zn(2+) is bound by residues cysteine 19, cysteine 22, cysteine 34, and cysteine 37. The C4-type zinc-finger motif lies at 19–37; it reads CRRCGRMSYHKRHKICSSC.

It belongs to the eukaryotic ribosomal protein eL37 family. It depends on Zn(2+) as a cofactor.

Binds to the 23S rRNA. In Methanospirillum hungatei JF-1 (strain ATCC 27890 / DSM 864 / NBRC 100397 / JF-1), this protein is Large ribosomal subunit protein eL37.